An 87-amino-acid chain; its full sequence is UPF0473 protein PTH_1066 (87 aa).

The protein belongs to the UPF0473 family.

This is UPF0473 protein PTH_1066 from Pelotomaculum thermopropionicum (strain DSM 13744 / JCM 10971 / SI).